Here is a 378-residue protein sequence, read N- to C-terminus: Anhydro-N-acetylmuramic acid kinase (378 aa).

Residue 9 to 16 (GTSADGID) participates in ATP binding.

The protein belongs to the anhydro-N-acetylmuramic acid kinase family.

The catalysed reaction is 1,6-anhydro-N-acetyl-beta-muramate + ATP + H2O = N-acetyl-D-muramate 6-phosphate + ADP + H(+). It participates in amino-sugar metabolism; 1,6-anhydro-N-acetylmuramate degradation. It functions in the pathway cell wall biogenesis; peptidoglycan recycling. Catalyzes the specific phosphorylation of 1,6-anhydro-N-acetylmuramic acid (anhMurNAc) with the simultaneous cleavage of the 1,6-anhydro ring, generating MurNAc-6-P. Is required for the utilization of anhMurNAc either imported from the medium or derived from its own cell wall murein, and thus plays a role in cell wall recycling. The sequence is that of Anhydro-N-acetylmuramic acid kinase from Synechococcus sp. (strain ATCC 27144 / PCC 6301 / SAUG 1402/1) (Anacystis nidulans).